The primary structure comprises 175 residues: Bifunctional protein PyrR (175 aa).

The PRPP-binding motif lies at 98–110 (VIIIDDVLYTGRT).

The protein belongs to the purine/pyrimidine phosphoribosyltransferase family. PyrR subfamily. Homodimer and homohexamer; in equilibrium.

The enzyme catalyses UMP + diphosphate = 5-phospho-alpha-D-ribose 1-diphosphate + uracil. Functionally, regulates transcriptional attenuation of the pyrimidine nucleotide (pyr) operon by binding in a uridine-dependent manner to specific sites on pyr mRNA. This disrupts an antiterminator hairpin in the RNA and favors formation of a downstream transcription terminator, leading to a reduced expression of downstream genes. In terms of biological role, also displays a weak uracil phosphoribosyltransferase activity which is not physiologically significant. The protein is Bifunctional protein PyrR of Staphylococcus carnosus (strain TM300).